The following is a 386-amino-acid chain: Succinate--CoA ligase [ADP-forming] subunit beta (386 aa).

In terms of domain architecture, ATP-grasp spans 9–244 (KEILRNFGVP…LDEEDPAEVE (236 aa)). ATP-binding positions include lysine 46, 53-55 (GRG), glutamate 99, alanine 102, and glutamate 107. Mg(2+) is bound by residues asparagine 199 and aspartate 213. Substrate contacts are provided by residues asparagine 264 and 321–323 (GIM).

The protein belongs to the succinate/malate CoA ligase beta subunit family. In terms of assembly, heterotetramer of two alpha and two beta subunits. Mg(2+) is required as a cofactor.

It catalyses the reaction succinate + ATP + CoA = succinyl-CoA + ADP + phosphate. The enzyme catalyses GTP + succinate + CoA = succinyl-CoA + GDP + phosphate. It participates in carbohydrate metabolism; tricarboxylic acid cycle; succinate from succinyl-CoA (ligase route): step 1/1. Functionally, succinyl-CoA synthetase functions in the citric acid cycle (TCA), coupling the hydrolysis of succinyl-CoA to the synthesis of either ATP or GTP and thus represents the only step of substrate-level phosphorylation in the TCA. The beta subunit provides nucleotide specificity of the enzyme and binds the substrate succinate, while the binding sites for coenzyme A and phosphate are found in the alpha subunit. The polypeptide is Succinate--CoA ligase [ADP-forming] subunit beta (Polaromonas sp. (strain JS666 / ATCC BAA-500)).